Consider the following 183-residue polypeptide: Ribosome-recycling factor (183 aa).

It belongs to the RRF family.

It localises to the cytoplasm. Its function is as follows. Responsible for the release of ribosomes from messenger RNA at the termination of protein biosynthesis. May increase the efficiency of translation by recycling ribosomes from one round of translation to another. This Christiangramia forsetii (strain DSM 17595 / CGMCC 1.15422 / KT0803) (Gramella forsetii) protein is Ribosome-recycling factor.